The sequence spans 800 residues: Protein translocase subunit SecA (800 aa).

Residues Gln85, 103–107 (GEGKT), and Asp504 each bind ATP.

This sequence belongs to the SecA family. Monomer and homodimer. Part of the essential Sec protein translocation apparatus which comprises SecA, SecYEG and auxiliary proteins SecDF. Other proteins may also be involved.

The protein resides in the cell membrane. The protein localises to the cytoplasm. It carries out the reaction ATP + H2O + cellular proteinSide 1 = ADP + phosphate + cellular proteinSide 2.. Part of the Sec protein translocase complex. Interacts with the SecYEG preprotein conducting channel. Has a central role in coupling the hydrolysis of ATP to the transfer of proteins into and across the cell membrane, serving as an ATP-driven molecular motor driving the stepwise translocation of polypeptide chains across the membrane. This Lactobacillus delbrueckii subsp. bulgaricus (strain ATCC 11842 / DSM 20081 / BCRC 10696 / JCM 1002 / NBRC 13953 / NCIMB 11778 / NCTC 12712 / WDCM 00102 / Lb 14) protein is Protein translocase subunit SecA.